Reading from the N-terminus, the 1866-residue chain is Nucleoporin Nup188 (1866 aa).

This sequence belongs to the Nup188 family. As to quaternary structure, part of the nuclear pore complex (NPC).

The protein resides in the nucleus. It is found in the nuclear pore complex. Its function is as follows. Component of the nuclear pore complex (NPC), a complex required for the trafficking across the nuclear envelope. Required for proper protein transport into the nucleus. This Drosophila melanogaster (Fruit fly) protein is Nucleoporin Nup188.